The primary structure comprises 317 residues: UV DNA damage endonuclease (317 aa).

This sequence belongs to the uve1/UvsE family.

Functionally, component in a DNA repair pathway. Removal of UV LIGHT damaged nucleotides. Recognizes pyrimidine dimers and cleave a phosphodiester bond immediately 5' to the lesion. This is UV DNA damage endonuclease from Bacillus cereus (strain ATCC 10987 / NRS 248).